Reading from the N-terminus, the 96-residue chain is Small ribosomal subunit protein bS6 (96 aa).

The protein belongs to the bacterial ribosomal protein bS6 family.

Binds together with bS18 to 16S ribosomal RNA. In Thermobifida fusca (strain YX), this protein is Small ribosomal subunit protein bS6.